Consider the following 470-residue polypeptide: Putative ankyrin repeat protein L279 (470 aa).

ANK repeat units lie at residues 119–148 (RDDY…NPGT), 149–178 (NKYA…GSDK), 372–401 (ETQG…NVNE), and 403–431 (NGKP…DISL).

In Acanthamoeba polyphaga (Amoeba), this protein is Putative ankyrin repeat protein L279.